Here is a 361-residue protein sequence, read N- to C-terminus: MKPSLIEKLKTLTYRYSEIGGLLSDSTVINDQDRYRELGKEYAQLEPIVKCFQQFQQNEKAIESAEEMQQEKDPELRKLAEEELEQLTLKKEELEDQLKLLLVPKDPNDELNVFLEIRAGTGGNEAAIFAGDLFRMYARYAETKGWRVNIVSAHEGEHGGFKEVIARVIGEGVYSQLKFESGAHRVQRVPVTESQGRIHTSACTVAIMPEVDEIDQIKINPAELRIDTFRASGAGGQHVNRTDSAIRITHLPTGVVVECQDERSQHKNKARAMSLLQSKLLAAERAKQDQEQAAKRKSLVGSGDRSERIRTYNFPQGRVTDHRINLTLYQLDEVIEGDLDPVIGPLIRELQAEQLAELSGE.

The residue at position 237 (Q237) is an N5-methylglutamine. The disordered stretch occupies residues 286-306 (AKQDQEQAAKRKSLVGSGDRS).

It belongs to the prokaryotic/mitochondrial release factor family. Methylated by PrmC. Methylation increases the termination efficiency of RF1.

It is found in the cytoplasm. Peptide chain release factor 1 directs the termination of translation in response to the peptide chain termination codons UAG and UAA. This Coxiella burnetii (strain CbuG_Q212) (Coxiella burnetii (strain Q212)) protein is Peptide chain release factor 1.